The primary structure comprises 369 residues: Anhydro-N-acetylmuramic acid kinase (369 aa).

12-19 (GTSMDGVD) is an ATP binding site.

Belongs to the anhydro-N-acetylmuramic acid kinase family.

It carries out the reaction 1,6-anhydro-N-acetyl-beta-muramate + ATP + H2O = N-acetyl-D-muramate 6-phosphate + ADP + H(+). The protein operates within amino-sugar metabolism; 1,6-anhydro-N-acetylmuramate degradation. It participates in cell wall biogenesis; peptidoglycan recycling. Functionally, catalyzes the specific phosphorylation of 1,6-anhydro-N-acetylmuramic acid (anhMurNAc) with the simultaneous cleavage of the 1,6-anhydro ring, generating MurNAc-6-P. Is required for the utilization of anhMurNAc either imported from the medium or derived from its own cell wall murein, and thus plays a role in cell wall recycling. The polypeptide is Anhydro-N-acetylmuramic acid kinase (Shewanella sp. (strain ANA-3)).